We begin with the raw amino-acid sequence, 201 residues long: Dephospho-CoA kinase (201 aa).

The 199-residue stretch at 3 to 201 (VIGLTGGIAS…WKERIEKNPR (199 aa)) folds into the DPCK domain. 11–16 (ASGKST) contacts ATP.

The protein belongs to the CoaE family.

It is found in the cytoplasm. It catalyses the reaction 3'-dephospho-CoA + ATP = ADP + CoA + H(+). It functions in the pathway cofactor biosynthesis; coenzyme A biosynthesis; CoA from (R)-pantothenate: step 5/5. Catalyzes the phosphorylation of the 3'-hydroxyl group of dephosphocoenzyme A to form coenzyme A. This Geobacter metallireducens (strain ATCC 53774 / DSM 7210 / GS-15) protein is Dephospho-CoA kinase.